The following is a 199-amino-acid chain: Holliday junction branch migration complex subunit RuvA (199 aa).

The domain I stretch occupies residues 1 to 63; it reads MIGCLIGEVF…EDAQQLYGFS (63 aa). Residues 64 to 142 form a domain II region; that stretch reads DAQEKTIFRT…TLAQGTSSAA (79 aa). Residues 143 to 150 are flexible linker; sequence ALPQIQFV. A domain III region spans residues 150–199; sequence VSNSPVAEAEAALQSLGYKPLEAQKAVAAVKADYTESADIIRAALKSMMK.

It belongs to the RuvA family. Homotetramer. Forms an RuvA(8)-RuvB(12)-Holliday junction (HJ) complex. HJ DNA is sandwiched between 2 RuvA tetramers; dsDNA enters through RuvA and exits via RuvB. An RuvB hexamer assembles on each DNA strand where it exits the tetramer. Each RuvB hexamer is contacted by two RuvA subunits (via domain III) on 2 adjacent RuvB subunits; this complex drives branch migration. In the full resolvosome a probable DNA-RuvA(4)-RuvB(12)-RuvC(2) complex forms which resolves the HJ.

The protein localises to the cytoplasm. Functionally, the RuvA-RuvB-RuvC complex processes Holliday junction (HJ) DNA during genetic recombination and DNA repair, while the RuvA-RuvB complex plays an important role in the rescue of blocked DNA replication forks via replication fork reversal (RFR). RuvA specifically binds to HJ cruciform DNA, conferring on it an open structure. The RuvB hexamer acts as an ATP-dependent pump, pulling dsDNA into and through the RuvAB complex. HJ branch migration allows RuvC to scan DNA until it finds its consensus sequence, where it cleaves and resolves the cruciform DNA. This Acinetobacter baumannii (strain ACICU) protein is Holliday junction branch migration complex subunit RuvA.